A 606-amino-acid polypeptide reads, in one-letter code: Scavenger receptor class A member 3 (606 aa).

The Cytoplasmic segment spans residues 1-56 (MKVRSAGSDRDVLCVTEEDLAGEDEDMPSFPCTQEGRAGPRCNRCQKNLSLHTSVR). The chain crosses the membrane as a helical; Signal-anchor for type II membrane protein span at residues 57 to 77 (ILYLFLTLLLVAVAVLASLVF). The Extracellular segment spans residues 78–606 (RKVDSLSEDI…PGPPGNQSPY (529 aa)). 10 N-linked (GlcNAc...) asparagine glycosylation sites follow: N115, N182, N224, N257, N313, N337, N365, N400, N430, and N451. Residues 455–606 (IRGVPGPPGP…PGPPGNQSPY (152 aa)) are disordered. Collagen-like domains lie at 456-558 (RGVP…PGPS) and 559-601 (GPQG…GPPG). Low complexity predominate over residues 497–516 (PQGQPGEPGPVGERGPAGPR). A compositionally biased stretch (gly residues) spans 526–535 (GSFGTGGPRG). Composition is skewed to pro residues over residues 548–558 (PEGPPGSPGPS) and 591–606 (PGLP…QSPY).

Its subcellular location is the endoplasmic reticulum membrane. The protein resides in the golgi apparatus membrane. Seems to protect cells by scavenging oxidative molecules or harmful products of oxidation. This Mus musculus (Mouse) protein is Scavenger receptor class A member 3 (Scara3).